We begin with the raw amino-acid sequence, 186 residues long: MLENLQGKFLIATPEIDDDYFDRTVIYICEHNSNGAMGLVINTPTDLSVLELITRMDFQMANQRNYHKDQMVLSGGPVSQDRGFIIHTKTEQEFLHSYRVTDNILLTTSGDVLDSLGKPEAPEKFIVCLGCATWKPEQLEQEIARNYWLISEANDKTLFETGYLERWVEANEMLGISGVLARAGRA.

Belongs to the UPF0301 (AlgH) family.

The chain is UPF0301 protein APL_0232 from Actinobacillus pleuropneumoniae serotype 5b (strain L20).